A 309-amino-acid polypeptide reads, in one-letter code: Tagatose-6-phosphate kinase (309 aa).

It belongs to the carbohydrate kinase PfkB family. LacC subfamily.

The catalysed reaction is D-tagatofuranose 6-phosphate + ATP = D-tagatofuranose 1,6-bisphosphate + ADP + H(+). The protein operates within carbohydrate metabolism; D-tagatose 6-phosphate degradation; D-glyceraldehyde 3-phosphate and glycerone phosphate from D-tagatose 6-phosphate: step 1/2. In Streptococcus pneumoniae serotype 19F (strain G54), this protein is Tagatose-6-phosphate kinase.